Reading from the N-terminus, the 78-residue chain is Small ribosomal subunit protein bS18 (78 aa).

The protein belongs to the bacterial ribosomal protein bS18 family. As to quaternary structure, part of the 30S ribosomal subunit. Forms a tight heterodimer with protein bS6.

Functionally, binds as a heterodimer with protein bS6 to the central domain of the 16S rRNA, where it helps stabilize the platform of the 30S subunit. In Ligilactobacillus salivarius (strain UCC118) (Lactobacillus salivarius), this protein is Small ribosomal subunit protein bS18.